The following is a 338-amino-acid chain: Envelope glycoprotein K (338 aa).

An N-terminal signal peptide occupies residues 1–30 (MLAVRSLQHLTTVIFITAYGLVLAWYIVFG). Over 31 to 121 (ASPLHRCIYA…VNCLEALWDT (91 aa)) the chain is Extracellular. Residues 31-121 (ASPLHRCIYA…VNCLEALWDT (91 aa)) form an involved in fusion region. Residues asparagine 48 and asparagine 58 are each glycosylated (N-linked (GlcNAc...) asparagine; by host). Residues 122-140 (QMRLVVVGWFLYLAFVALH) traverse the membrane as a helical segment. Topologically, residues 141-212 (QRRCMFGVVS…DPVTFLYHRP (72 aa)) are cytoplasmic. A helical transmembrane segment spans residues 213–233 (AIGVIVGCELLLRFVALGLIV). The Extracellular segment spans residues 234 to 243 (GTALISRGAC). Residues 244 to 264 (AITHPLFLTITTWCFVSIIAL) form a helical membrane-spanning segment. Residues 265–301 (TELYFILRRGSAPKNAEPAAPRGRSKGWSGVCGRCCS) are Cytoplasmic-facing. The interval 265–301 (TELYFILRRGSAPKNAEPAAPRGRSKGWSGVCGRCCS) is interaction with UL20. Residues 302–322 (IILSGIAVRLCYIAVVAGVVL) traverse the membrane as a helical segment. Topologically, residues 323-338 (VALRYEQEIQRRLFDL) are extracellular.

It belongs to the alphaherpesvirinae glycoprotein K family. In terms of assembly, interacts (via UL20 interaction region) with protein UL20 (via N-terminus); this interaction probably plays a role in the coordinate transport of protein UL20 and gK to the trans-Golgi network (TGN), and is required for the cell surface expression of gK. N-glycosylated.

It is found in the host cell membrane. The protein resides in the host endosome membrane. It localises to the host Golgi apparatus membrane. In terms of biological role, glycoprotein that probably modulates membrane fusion events during secondary envelopment of cytoplasmic capsids that bud into specific trans-Golgi network (TGN)-derived membranes. Also plays a role, together with gB, in virus-induced cell-to-cell fusion (syncytia formation). Seems to block fusion of virions with infected-cell membranes. The polypeptide is Envelope glycoprotein K (gK) (Human herpesvirus 2 (strain HG52) (HHV-2)).